Reading from the N-terminus, the 108-residue chain is Putative septation protein SpoVG (108 aa).

Residues 84–108 (FEKQSSVETEPVTEENMETAENENE) form a disordered region. Positions 94–108 (PVTEENMETAENENE) are enriched in acidic residues.

Belongs to the SpoVG family.

In terms of biological role, could be involved in septation. The protein is Putative septation protein SpoVG of Finegoldia magna (strain ATCC 29328 / DSM 20472 / WAL 2508) (Peptostreptococcus magnus).